Consider the following 1074-residue polypeptide: DNA helicase B (1074 aa).

Disordered stretches follow at residues 1-38 (MARQ…EEEF), 380-420 (GAKP…HVRS), and 932-1014 (GSCA…FDEE). Positions 20–38 (DDEEEDCAQEEEGEQEEEF) are enriched in acidic residues. Residues 934–946 (CAPSTGFASQPSS) show a composition bias toward polar residues. Ser942 and Ser946 each carry phosphoserine. Position 992 is a phosphothreonine (Thr992). Ser1015 and Ser1026 each carry phosphoserine. Positions 1022 to 1046 (VEAPSPQVSSVFQNMRLNTLTPRQL) match the Nuclear export signal motif. Residues 1040–1074 (TLTPRQLFKPTDNQDTGTAGVADDANDPSNQEMEM) form a disordered region.

It belongs to the RecD family. HELB subfamily. Binds to RPA1; this interaction promotes HELB recruitment to chromatin following DNA damage. Interacts with at least two subunits of the DNA polymerase alpha complex. Interacts with CDC45. Interacts with TOPB1. In terms of processing, phosphorylated at Ser-942 by CDK2 during the G1/S transition, resulting in its nuclear export into the cytoplasm. As S phase progresses, its exclusion from the nucleus promotes the activation of long-range resection.

The protein localises to the nucleus. It is found in the cytoplasm. It localises to the chromosome. It carries out the reaction ATP + H2O = ADP + phosphate + H(+). Its function is as follows. 5'-3' DNA helicase involved in DNA damage response by acting as an inhibitor of DNA end resection. Recruitment to single-stranded DNA (ssDNA) following DNA damage leads to inhibit the nucleases catalyzing resection, such as EXO1, BLM and DNA2, possibly via the 5'-3' ssDNA translocase activity of HELB. As cells approach S phase, DNA end resection is promoted by the nuclear export of HELB following phosphorylation. Acts independently of TP53BP1. Unwinds duplex DNA with 5'-3' polarity. Has single-strand DNA-dependent ATPase and DNA helicase activities. Prefers ATP and dATP as substrates. During S phase, may facilitate cellular recovery from replication stress. This Mus musculus (Mouse) protein is DNA helicase B.